We begin with the raw amino-acid sequence, 851 residues long: Phosphatidylinositol 4-kinase pik1 (851 aa).

The PIK helical domain maps to 1–123 (MPSSNSGNEL…KICKRLYNRI (123 aa)). A phosphoserine mark is found at Ser-202, Ser-219, Ser-222, and Ser-235. Tyr-236 is modified (phosphotyrosine). The interval 384-404 (LQDSTDNDISESESEGGDLSM) is disordered. The segment covering 388 to 399 (TDNDISESESEG) has biased composition (acidic residues). Residues 558–836 (YAKKERIRKS…LIQKANCSVW (279 aa)) form the PI3K/PI4K catalytic domain. The interval 564–570 (IRKSSPY) is G-loop. Residues 706 to 714 (QLKDRHNGN) form a catalytic loop region. Positions 725–749 (HIDFGFLLTNTPGNVGFESAPFKLT) are activation loop.

Belongs to the PI3/PI4-kinase family. In terms of assembly, interacts with cdc4 and cam2.

It localises to the golgi apparatus. Its subcellular location is the nucleus. The enzyme catalyses a 1,2-diacyl-sn-glycero-3-phospho-(1D-myo-inositol) + ATP = a 1,2-diacyl-sn-glycero-3-phospho-(1D-myo-inositol 4-phosphate) + ADP + H(+). Its function is as follows. Acts on phosphatidylinositol (PI) in the first committed step in the production of the second messenger inositol 1,4,5,-trisphosphate. PIK1 is part of a nuclear phosphoinositide cycle and could control cytokinesis through the actin cytoskeleton. This Schizosaccharomyces pombe (strain 972 / ATCC 24843) (Fission yeast) protein is Phosphatidylinositol 4-kinase pik1 (pik1).